A 208-amino-acid chain; its full sequence is Interleukin-6 (208 aa).

The first 27 residues, 1–27, serve as a signal peptide directing secretion; it reads MTFLSTSAFSPLAFSLGLLLVVATAFP. Residues Cys68 and Cys74 are joined by a disulfide bond. Ser77 carries the phosphoserine modification. Cys97 and Cys107 are oxidised to a cystine.

This sequence belongs to the IL-6 superfamily. In terms of assembly, component of a hexamer of two molecules each of IL6, IL6R and IL6ST; first binds to IL6R to associate with the signaling subunit IL6ST. Interacts with IL6R (via the N-terminal ectodomain); this interaction may be affected by IL6R-binding with SORL1, hence decreasing IL6 cis signaling. Interacts with SORL1 (via the N-terminal ectodomain); this interaction leads to IL6 internalization and lysosomal degradation. May form a trimeric complex with the soluble SORL1 ectodomain and soluble IL6R receptor; this interaction might stabilize circulating IL6, hence promoting IL6 trans signaling.

The protein localises to the secreted. In terms of biological role, cytokine with a wide variety of biological functions in immunity, tissue regeneration, and metabolism. Binds to IL6R, then the complex associates to the signaling subunit IL6ST/gp130 to trigger the intracellular IL6-signaling pathway. The interaction with the membrane-bound IL6R and IL6ST stimulates 'classic signaling', whereas the binding of IL6 and soluble IL6R to IL6ST stimulates 'trans-signaling'. Alternatively, 'cluster signaling' occurs when membrane-bound IL6:IL6R complexes on transmitter cells activate IL6ST receptors on neighboring receiver cells. IL6 is a potent inducer of the acute phase response. Rapid production of IL6 contributes to host defense during infection and tissue injury, but excessive IL6 synthesis is involved in disease pathology. In the innate immune response, is synthesized by myeloid cells, such as macrophages and dendritic cells, upon recognition of pathogens through toll-like receptors (TLRs) at the site of infection or tissue injury. In the adaptive immune response, is required for the differentiation of B cells into immunoglobulin-secreting cells. Plays a major role in the differentiation of CD4(+) T cell subsets. Essential factor for the development of T follicular helper (Tfh) cells that are required for the induction of germinal-center formation. Required to drive naive CD4(+) T cells to the Th17 lineage. Also required for proliferation of myeloma cells and the survival of plasmablast cells. Its function is as follows. Acts as an essential factor in bone homeostasis and on vessels directly or indirectly by induction of VEGF, resulting in increased angiogenesis activity and vascular permeability. Induces, through 'trans-signaling' and synergistically with IL1B and TNF, the production of VEGF. Involved in metabolic controls, is discharged into the bloodstream after muscle contraction increasing lipolysis and improving insulin resistance. 'Trans-signaling' in central nervous system also regulates energy and glucose homeostasis. Mediates, through GLP-1, crosstalk between insulin-sensitive tissues, intestinal L cells and pancreatic islets to adapt to changes in insulin demand. Also acts as a myokine. Plays a protective role during liver injury, being required for maintenance of tissue regeneration. Also has a pivotal role in iron metabolism by regulating HAMP/hepcidin expression upon inflammation or bacterial infection. Through activation of IL6ST-YAP-NOTCH pathway, induces inflammation-induced epithelial regeneration. The chain is Interleukin-6 (IL6) from Felis catus (Cat).